The chain runs to 348 residues: Phosphate acyltransferase (348 aa).

The protein belongs to the PlsX family. As to quaternary structure, homodimer. Probably interacts with PlsY.

Its subcellular location is the cytoplasm. It carries out the reaction a fatty acyl-[ACP] + phosphate = an acyl phosphate + holo-[ACP]. Its pathway is lipid metabolism; phospholipid metabolism. Catalyzes the reversible formation of acyl-phosphate (acyl-PO(4)) from acyl-[acyl-carrier-protein] (acyl-ACP). This enzyme utilizes acyl-ACP as fatty acyl donor, but not acyl-CoA. The protein is Phosphate acyltransferase of Pectobacterium carotovorum subsp. carotovorum (strain PC1).